Consider the following 367-residue polypeptide: Zorya protein ZorE (367 aa).

Functionally, component of antiviral defense system Zorya type II, composed of ZorA, ZorB and ZorE. Expression of Zorya type II in E.coli (strain MG1655) confers resistance to phages SECphi7 and T7. While most T7 infected Zorya-containing cells undergo abortive infection, a minority produce viable phage progeny. These eventually accumulate to a high multiplicity of infection, leading to culture collapse by 170 minutes after initial infection. ZorA and ZorB probably assemble in the cell inner membrane and exert their effect there. This may be a nuclease. This Escherichia coli (strain ATCC 8739 / DSM 1576 / NBRC 3972 / NCIMB 8545 / WDCM 00012 / Crooks) protein is Zorya protein ZorE.